The sequence spans 314 residues: GDSL-like esterase Rv1075c (314 aa).

Residues 1–21 form the signal peptide; that stretch reads MPRRSTIALATAGALASTGTA. The active-site Nucleophile is the Ser-80. Catalysis depends on Asp-244, which acts as the Proton donor. Catalysis depends on His-247, which acts as the Proton acceptor. Residues 276–314 form a disordered region; sequence IHETPSRPGTATLEPGHTRHSMMSRLRRPRPARAVPTGG. A compositionally biased stretch (basic residues) spans 293 to 306; sequence TRHSMMSRLRRPRP.

The protein belongs to the 'GDSL' lipolytic enzyme family.

It carries out the reaction an acetyl ester + H2O = an aliphatic alcohol + acetate + H(+). The catalysed reaction is a butanoate ester + H2O = an aliphatic alcohol + butanoate + H(+). It catalyses the reaction triacetin + H2O = diacetylglycerol + acetate + H(+). The enzyme catalyses 1,2,3-tributanoylglycerol + H2O = dibutanoylglycerol + butanoate + H(+). With respect to regulation, esterase activity is significantly inhibited by the serine modifier phenylmethylsulfonyl fluoride (PMSF). Completely inhibited by diethyl pyrocarbonate. Functionally, esterase that preferentially hydrolyzes short-chain fatty acids, particularly pNP-acetate (C2) and pNP-butyrate (C4). Also has weak activity with pNP-hexanoate (C6) and pNP-octanoate (C8). It can also hydrolyze short-chain tryglycerides such as triacetin and tributyrin. Important for intracellular survival. In Mycobacterium tuberculosis (strain ATCC 25618 / H37Rv), this protein is GDSL-like esterase Rv1075c.